The chain runs to 133 residues: Large-conductance mechanosensitive channel (133 aa).

2 helical membrane passes run 10-30 (FAMK…TAFG) and 76-96 (GNFI…FCVI).

Belongs to the MscL family. Homopentamer.

The protein localises to the cell inner membrane. Its function is as follows. Channel that opens in response to stretch forces in the membrane lipid bilayer. May participate in the regulation of osmotic pressure changes within the cell. This is Large-conductance mechanosensitive channel from Campylobacter curvus (strain 525.92).